Reading from the N-terminus, the 149-residue chain is Ribonuclease H (149 aa).

Positions 1–143 (MNQVVIYTDG…ADALANKGVD (143 aa)) constitute an RNase H type-1 domain. Mg(2+)-binding residues include Asp-9, Glu-47, Asp-69, and Asp-135.

This sequence belongs to the RNase H family. Monomer. The cofactor is Mg(2+).

It is found in the cytoplasm. It carries out the reaction Endonucleolytic cleavage to 5'-phosphomonoester.. Its function is as follows. Endonuclease that specifically degrades the RNA of RNA-DNA hybrids. This is Ribonuclease H from Paracidovorax citrulli (strain AAC00-1) (Acidovorax citrulli).